Here is a 291-residue protein sequence, read N- to C-terminus: DegV domain-containing protein CPE0026 (291 aa).

The DegV domain occupies 4-286 (FVIFTDSAAD…IGTLAVFFLG (283 aa)). The hexadecanoate site is built by T63 and S95.

Functionally, may bind long-chain fatty acids, such as palmitate, and may play a role in lipid transport or fatty acid metabolism. This Clostridium perfringens (strain 13 / Type A) protein is DegV domain-containing protein CPE0026.